A 95-amino-acid chain; its full sequence is Small ribosomal subunit protein bS6 (95 aa).

Belongs to the bacterial ribosomal protein bS6 family.

Functionally, binds together with bS18 to 16S ribosomal RNA. This Nocardia farcinica (strain IFM 10152) protein is Small ribosomal subunit protein bS6.